We begin with the raw amino-acid sequence, 137 residues long: uncharacterized protein (137 aa).

This is an uncharacterized protein from Escherichia coli (strain K12).